A 277-amino-acid chain; its full sequence is Phosphonoacetaldehyde hydrolase-like protein (277 aa).

The protein belongs to the HAD-like hydrolase superfamily. PhnX family.

The chain is Phosphonoacetaldehyde hydrolase-like protein (phnX2) from Syntrophobacter fumaroxidans (strain DSM 10017 / MPOB).